The primary structure comprises 282 residues: Protein GAM-1 (282 aa).

A BC-box-like motif is present at residues 251–260 (SLQDWARLGV).

As to quaternary structure, interacts with host HDAC1. Interacts with host E1-activating enzyme (SAE1/UBA2 heterodimer). Interacts with host retinoblastoma protein. Seems to form a complex with host E4F1 and HDAC1. Seems to form complexes with either CUL2-elongin BC complex-RBX1 or CUL5-elongin BC complex-RBX1. Interacts with TCEB1/Elongin-C, CUL2 and CUL5 in vitro.

Its subcellular location is the host nucleus. In terms of biological role, early protein essential for viral replication. Strong and global transcriptional activator of both viral and cellular genes. Activates transcription by blocking host retinoblastoma protein (RB) and inhibiting the SUMO pathway. Inhibition of host RB leads to the activation of E2F1-dependent transcription and, in particular, of E2F1-regulated S-phase genes. Stimulation of progression from G1 to S phase allows the virus to efficiently use the cellular DNA replicating machinery to achieve viral genome replication. Blocks the SUMO pathway by targeting the E1 enzyme (SAE1/UBA2 heterodimer) to the ubiquitin-proteasome machinery. Mediates SAE1 degradation possibly through the formation of complexes with either CUL2-elongin BC complex-RBX1 or CUL5-elongin BC complex-RBX1. The degradation of UBA2 is probably a consequent effect of SAE1 disappearance. Inhibits HDAC1 sumoylation, thereby interfering with histone deacetylation mediated by HDAC1, leading to activation of transcription. Mediates induction of heat-shock response. Seems to have an antiapoptotic function. The sequence is that of Protein GAM-1 from Galliformes (FAdV-1).